Here is a 340-residue protein sequence, read N- to C-terminus: N-acetyl-gamma-glutamyl-phosphate reductase (340 aa).

Cys146 is an active-site residue.

It belongs to the NAGSA dehydrogenase family. Type 1 subfamily.

The protein resides in the cytoplasm. The enzyme catalyses N-acetyl-L-glutamate 5-semialdehyde + phosphate + NADP(+) = N-acetyl-L-glutamyl 5-phosphate + NADPH + H(+). It functions in the pathway amino-acid biosynthesis; L-arginine biosynthesis; N(2)-acetyl-L-ornithine from L-glutamate: step 3/4. Catalyzes the NADPH-dependent reduction of N-acetyl-5-glutamyl phosphate to yield N-acetyl-L-glutamate 5-semialdehyde. The polypeptide is N-acetyl-gamma-glutamyl-phosphate reductase (Streptococcus sanguinis (strain SK36)).